The chain runs to 161 residues: Peroxynitrite isomerase (161 aa).

A GXWXGXG motif is present at residues 17 to 23; that stretch reads GSWVGRG. H152 serves as a coordination point for heme b.

It belongs to the nitrobindin family. Homodimer. Heme b is required as a cofactor.

The enzyme catalyses peroxynitrite = nitrate. It participates in nitrogen metabolism. Heme-binding protein able to scavenge peroxynitrite and to protect free L-tyrosine against peroxynitrite-mediated nitration, by acting as a peroxynitrite isomerase that converts peroxynitrite to nitrate. Therefore, this protein likely plays a role in peroxynitrite sensing and in the detoxification of reactive nitrogen and oxygen species (RNS and ROS, respectively). Is able to bind nitric oxide (NO) in vitro, but may act as a sensor of peroxynitrite levels in vivo. This Mycobacterium leprae (strain TN) protein is Peroxynitrite isomerase.